The chain runs to 2346 residues: MDEPSSLAKPLELNQHSRFIIGSVSEDNSEDEISNLVKLDLLEEKEGSLSPASVSSDTLSDLGISSLQDGLALHMRSSMSGLHLVKQGRDRKKIDSQRDFTVASPAEFVTRFGGNKVIEKVLIANNGIAAVKCMRSIRRWSYEMFRNERAIRFVVMVTPEDLKANAEYIKMADHYVPVPGGPNNNNYANVELILDIAKRIPVQAVWAGWGHASENPKLPELLLKNGIAFMGPPSQAMWALGDKIASSIVAQTAGIPTLPWSGSGLCVDWHENDFSKRILNVPQELYEKGYVKDVDDGLKAAEEVGYPVMIKASEGGGGKGIRKVNNADDFPNLFRQVQAEVPGSPIFVMRLAKQSRHLEVQILADQYGNAISLFGRDCSVQRRHQKIIEEAPAAIATPAVFEHMEQCAVKLARMVGYVSAGTVEYLYSQDGSFYFLELNPRLQVEHPCTEMVADVNLPAAQLQIAMGIPLYRIKDIRMMYGVSPWGDAPIDFENSAHVPCPRGHVIAARITSENPDEGFKPSSGTVQELNFRSNKNVWGYFSVAAAGGLHEFADSQFGHCFSWGENREEAISNMVVALKELSIRGDFRTTVEYLIKLLETESFQLNRIGTGWLDRLIAEKVQAERPDTMLGVVCGALHVADVSLRNSISNFLHSLERGQVLTAHTLLNTVDVELIYEGVKYVLKVTRQSPNSYVVIMNGSCVEVDVHRLSDGGLLLSYDVSSYTTYMKEEVDRYRITIGNKTCVFEKENDPSVLRSPSAGKLIQYIVEDGGHVFAGQCYAEIEVMKMVMTLTAAESGCIHYVKRPGAALDPGCVIAKMQLDNPSKVQQAELHTGSLPRIQSTALRGEKLHRVFHYVLDNLVNVMNGYCLPDPFFSSRVKDWVERLMKTLRDPSLPLLELQDIMTSVSGRIPPNVEKSIKKEMAQYASNITSVLCQFPSQQIANILDSHAATLNRKSEREVFFMNTQSIVQLVQRYRSGIRGHMKAVVMDLLRQYLRVETQFQNGHYDKCVFALREENKSDMNTVLNYIFSHAQVTRKNLLVTMLIDQLCGRGPTLTDELLNILTELTQLSKTTNAKVALRARQVLIASHLPSYELRLNQVESIFLSAIDMYGHQFCIENLQKLILSETSIFDVLPNFFYHSNQVVRMAALEVYVRRAYIAYELNSVQHRQLKDNTCVVEFQFMLPTSHPNRGNIPTLNRMSFSSNLNHYGMTHVASVSDVLLDNAFTPPCQRMGGMVSFRTFEDFVRIFDEVMGCFCDSPPQSPTFPEAGHTSLYDEDKVPRDEPIHILNVAIKTDCDIEDDSLAAMFREFTQQNKATLVEHGIRRLTFLVAQKDFRKQVNYEVDQRFHREFPKFFTFRARDKFEEDRIYRHLEPALAFQLELNRMRNFDLTAIPCANHKMHLYLGAAKVEVGTEVTDYRFFVRAIIRHSDLVTKEASFEYLQNEGERLLLEAMDELEVAFNNTNVRTDCNHIFLNFVPTVIMDPSKIEESVRSMVMRYGSRLWKLRVLQAELKINIRLTPTGKAIPIRLFLTNESGYYLDISLYKEVTDSRTAQIMFQAYGDKQGPLHGMLINTPYVTKDQLQSKRFQAQSLGTTYIYDIPEMFRQSLIKLWESMSSQAFLPPPPLPSDILTYTELVLDDQGQLVHMNRLPGGNEIGMVAWKMTLKSPEYPDGRDIIVIGNDITYRIGSFGPQEDLLFLRASELARAEGIPRIYVAANSGARIGLAEEIRHMFHVAWVDPEDPYKGYKYLYLTPQDYKRVSALNSVHCEHVEDEGESRYKITDIIGKEEGLGAENLRGSGMIAGESSLAYDEIITISLVTCRAIGIGAYLVRLGQRTIQVENSHLILTGAGALNKVLGREVYTSNNQLGGIQIMHNNGVTHSTVCDDFEGVFTVLHWLSYMPKSVYSSVPLLNSKDPIDRVIEFVPTKAPYDPRWMLAGRPHPTQKGQWLSGFFDYGSFSEIMQPWAQTVVVGRARLGGIPVGVVAVETRTVELSIPADPANLDSEAKIIQQAGQVWFPDSAFKTYQAIKDFNREGLPLMVFANWRGFSGGMKDMYDQVLKFGAYIVDGLRECSQPVMVYIPPQAELRGGSWVVIDPTINPRHMEMYADRESRGSVLEPEGTVEIKFRRKDLVKTMRRVDPVYIHLAERLGTPELSVAERKELESKLKEREEFLLPIYHQVAVQFADLHDTPGRMQEKGVINDILDWKTSRTFFYWRLRRLLLEDLVKKKIHNANPELTDGQIQAMLRRWFVEVEGTVKAYVWDNNKDLVEWLEKQLTEEDGVRSVIEENIKYISRDYVLKQIRSLVQANPEVAMDSIVHMTQHISPTQRAEVVRILSTMDSPST.

Met1 carries the N-acetylmethionine modification. 8 positions are modified to phosphoserine: Ser5, Ser23, Ser25, Ser29, Ser34, Ser48, Ser50, and Ser53. Thr58 is subject to Phosphothreonine. The residue at position 78 (Ser78) is a Phosphoserine. Ser80 bears the Phosphoserine; by AMPK mark. The Biotin carboxylation domain occupies 117–618 (VIEKVLIANN…GTGWLDRLIA (502 aa)). In terms of domain architecture, ATP-grasp spans 275-466 (SKRILNVPQE…LPAAQLQIAM (192 aa)). 315–320 (GGGGKG) contacts ATP. The Mg(2+) site is built by Glu424, Glu437, and Asn439. 3 residues coordinate Mn(2+): Glu424, Glu437, and Asn439. The active site involves Arg441. Thr610 carries the phosphothreonine modification. In terms of domain architecture, Biotinyl-binding spans 745–819 (FEKENDPSVL…DPGCVIAKMQ (75 aa)). Lys786 is modified (N6-biotinyllysine). Phosphoserine occurs at positions 835, 1201, 1216, and 1218. Thr1227 is subject to Phosphothreonine. Residues Ser1259, Ser1263, and Ser1273 each carry the phosphoserine modification. At Lys1334 the chain carries N6-acetyllysine. The CoA carboxyltransferase N-terminal domain maps to 1576–1914 (PYVTKDQLQS…SVYSSVPLLN (339 aa)). The segment at 1576–2234 (PYVTKDQLQS…EDLVKKKIHN (659 aa)) is carboxyltransferase. CoA-binding residues include Arg1823, Lys2127, and Arg2129. The CoA carboxyltransferase C-terminal domain occupies 1918–2234 (PIDRVIEFVP…EDLVKKKIHN (317 aa)). At Thr2153 the chain carries Phosphothreonine.

As to quaternary structure, monomer, homodimer, and homotetramer. Can form filamentous polymers. Interacts in its inactive phosphorylated form with the BRCT domains of BRCA1 which prevents ACACA dephosphorylation and inhibits lipid synthesis. Interacts with MID1IP1; interaction with MID1IP1 promotes oligomerization and increases its activity. Requires Mg(2+) as cofactor. Mn(2+) is required as a cofactor. Biotin serves as cofactor. Post-translationally, phosphorylation on Ser-1263 is required for interaction with BRCA1. In terms of processing, phosphorylation at Ser-80 by AMPK inactivates enzyme activity. The biotin cofactor is covalently attached to the central biotinyl-binding domain and is required for the catalytic activity.

The protein resides in the cytoplasm. It is found in the cytosol. It catalyses the reaction hydrogencarbonate + acetyl-CoA + ATP = malonyl-CoA + ADP + phosphate + H(+). The protein operates within lipid metabolism; malonyl-CoA biosynthesis; malonyl-CoA from acetyl-CoA: step 1/1. Inhibited by phosphorylation. Citrate promotes oligomerization of the protein into filaments that correspond to the most active form of the carboxylase. Functionally, cytosolic enzyme that catalyzes the carboxylation of acetyl-CoA to malonyl-CoA, the first and rate-limiting step of de novo fatty acid biosynthesis. This is a 2 steps reaction starting with the ATP-dependent carboxylation of the biotin carried by the biotin carboxyl carrier (BCC) domain followed by the transfer of the carboxyl group from carboxylated biotin to acetyl-CoA. The protein is Acetyl-CoA carboxylase 1 of Bos taurus (Bovine).